The primary structure comprises 344 residues: Dihydroorotase (344 aa).

Zn(2+)-binding residues include His-13 and His-15. Substrate contacts are provided by residues 15–17 and Asn-41; that span reads HLR. Lys-99, His-136, and His-174 together coordinate Zn(2+). At Lys-99 the chain carries N6-carboxylysine. Residue His-136 participates in substrate binding. Residue Leu-219 participates in substrate binding. Residue Asp-247 participates in Zn(2+) binding. Asp-247 is an active-site residue. Positions 251 and 263 each coordinate substrate.

This sequence belongs to the metallo-dependent hydrolases superfamily. DHOase family. Class II DHOase subfamily. Homodimer. The cofactor is Zn(2+).

It catalyses the reaction (S)-dihydroorotate + H2O = N-carbamoyl-L-aspartate + H(+). It functions in the pathway pyrimidine metabolism; UMP biosynthesis via de novo pathway; (S)-dihydroorotate from bicarbonate: step 3/3. In terms of biological role, catalyzes the reversible cyclization of carbamoyl aspartate to dihydroorotate. The sequence is that of Dihydroorotase from Acinetobacter baylyi (strain ATCC 33305 / BD413 / ADP1).